The chain runs to 141 residues: MALERTLSIIKPDAVAKNVIGQIYSRFENAGLKIVAARMAHLSRADAEKFYAVHAERPFFKDLVDFMISGPVMIQVLEGEDAILKNRDLMGATDPKKAEKGTIRADFADSIDANAVHGSDAPETARAEVAFFFPEMNVYSR.

The ATP site is built by Lys-11, Phe-59, Arg-87, Thr-93, Arg-104, and Asn-114. The active-site Pros-phosphohistidine intermediate is His-117.

It belongs to the NDK family. Homotetramer. Mg(2+) serves as cofactor.

It localises to the cytoplasm. It catalyses the reaction a 2'-deoxyribonucleoside 5'-diphosphate + ATP = a 2'-deoxyribonucleoside 5'-triphosphate + ADP. The catalysed reaction is a ribonucleoside 5'-diphosphate + ATP = a ribonucleoside 5'-triphosphate + ADP. Major role in the synthesis of nucleoside triphosphates other than ATP. The ATP gamma phosphate is transferred to the NDP beta phosphate via a ping-pong mechanism, using a phosphorylated active-site intermediate. The polypeptide is Nucleoside diphosphate kinase (Burkholderia mallei (strain NCTC 10247)).